Consider the following 561-residue polypeptide: DNA ligase (561 aa).

Residue E249 coordinates ATP. K251 (N6-AMP-lysine intermediate) is an active-site residue. ATP is bound by residues R256, R271, E301, F340, R417, and K423.

It belongs to the ATP-dependent DNA ligase family. It depends on Mg(2+) as a cofactor.

It carries out the reaction ATP + (deoxyribonucleotide)n-3'-hydroxyl + 5'-phospho-(deoxyribonucleotide)m = (deoxyribonucleotide)n+m + AMP + diphosphate.. Its function is as follows. DNA ligase that seals nicks in double-stranded DNA during DNA replication, DNA recombination and DNA repair. The polypeptide is DNA ligase (Methanothermobacter thermautotrophicus (strain ATCC 29096 / DSM 1053 / JCM 10044 / NBRC 100330 / Delta H) (Methanobacterium thermoautotrophicum)).